The following is a 378-amino-acid chain: GTP 3',8-cyclase 3 (378 aa).

Positions 40–259 (RCGRTMGDLR…STLGKKYGPI (220 aa)) constitute a Radical SAM core domain. Arg-49 contributes to the GTP binding site. Residues Cys-56 and Cys-60 each coordinate [4Fe-4S] cluster. S-adenosyl-L-methionine is bound at residue Tyr-62. Cys-63 is a binding site for [4Fe-4S] cluster. GTP is bound at residue Arg-99. An S-adenosyl-L-methionine-binding site is contributed by Gly-103. A GTP-binding site is contributed by Thr-134. S-adenosyl-L-methionine is bound at residue Ser-158. Lys-195 is a GTP binding site. Met-229 contacts S-adenosyl-L-methionine. The [4Fe-4S] cluster site is built by Cys-292 and Cys-295. A GTP-binding site is contributed by 297–299 (RSR). Cys-309 is a binding site for [4Fe-4S] cluster.

The protein belongs to the radical SAM superfamily. MoaA family. As to quaternary structure, monomer and homodimer. [4Fe-4S] cluster is required as a cofactor.

The catalysed reaction is GTP + AH2 + S-adenosyl-L-methionine = (8S)-3',8-cyclo-7,8-dihydroguanosine 5'-triphosphate + 5'-deoxyadenosine + L-methionine + A + H(+). Its pathway is cofactor biosynthesis; molybdopterin biosynthesis. In terms of biological role, catalyzes the cyclization of GTP to (8S)-3',8-cyclo-7,8-dihydroguanosine 5'-triphosphate. The protein is GTP 3',8-cyclase 3 of Mycobacterium bovis (strain ATCC BAA-935 / AF2122/97).